The chain runs to 1040 residues: Multidrug resistance protein MdtB (1040 aa).

The next 12 helical transmembrane spans lie at 16-36 (FILR…AGLV), 342-362 (DVQF…YLFL), 373-393 (IAVP…GFSV), 396-416 (LTLM…IVVI), 440-460 (IGFT…PLLF), 472-492 (FAVT…TLTP), 537-557 (WITL…YIVI), 865-885 (STIW…GVLY), 888-908 (FIHP…ALLA), 911-931 (ISGS…IGIV), 968-988 (ILMT…STGV), and 1002-1022 (GGLV…YLLF).

Belongs to the resistance-nodulation-cell division (RND) (TC 2.A.6) family. MdtB subfamily. Part of a tripartite efflux system composed of MdtA, MdtB and MdtC. MdtB forms a heteromultimer with MdtC.

It localises to the cell inner membrane. This chain is Multidrug resistance protein MdtB, found in Musicola paradisiaca (strain Ech703) (Dickeya paradisiaca).